We begin with the raw amino-acid sequence, 142 residues long: Transcriptional regulator MraZ (142 aa).

SpoVT-AbrB domains lie at 5–47 and 76–119; these read RFTH…PMDS and ATVV…SPEN.

The protein belongs to the MraZ family. Forms oligomers.

The protein localises to the cytoplasm. It is found in the nucleoid. The sequence is that of Transcriptional regulator MraZ from Thermomicrobium roseum (strain ATCC 27502 / DSM 5159 / P-2).